Here is a 582-residue protein sequence, read N- to C-terminus: Choline kinase (582 aa).

The interval 1 to 36 (MVQESRPGSVRSYSVGYQARSRSSSQRRHSLTRQRS) is disordered. Serine 30 carries the post-translational modification Phosphoserine; by PKA. A phosphoserine mark is found at serine 48 and serine 51. At threonine 54 the chain carries Phosphothreonine. Serine 85 is subject to Phosphoserine; by PKA.

Belongs to the choline/ethanolamine kinase family. Monomer. Interacts with NAP1. Mg(2+) is required as a cofactor.

Its subcellular location is the cytoplasm. It catalyses the reaction choline + ATP = phosphocholine + ADP + H(+). The catalysed reaction is ethanolamine + ATP = phosphoethanolamine + ADP + H(+). The protein operates within phospholipid metabolism; phosphatidylcholine biosynthesis; phosphocholine from choline: step 1/1. Functionally, catalyzes the committed step in the synthesis of phosphatidylcholine by the CDP-choline pathway. Also exhibits ethanolamine kinase activity but it is a poor substrate at 14% efficiency compared with choline. This is Choline kinase from Saccharomyces cerevisiae (strain ATCC 204508 / S288c) (Baker's yeast).